The chain runs to 72 residues: Translation initiation factor IF-1 (72 aa).

The S1-like domain maps to 1-72 (MSKDDVIEMQ…TRGRITWRAK (72 aa)).

The protein belongs to the IF-1 family. In terms of assembly, component of the 30S ribosomal translation pre-initiation complex which assembles on the 30S ribosome in the order IF-2 and IF-3, IF-1 and N-formylmethionyl-tRNA(fMet); mRNA recruitment can occur at any time during PIC assembly.

The protein resides in the cytoplasm. One of the essential components for the initiation of protein synthesis. Stabilizes the binding of IF-2 and IF-3 on the 30S subunit to which N-formylmethionyl-tRNA(fMet) subsequently binds. Helps modulate mRNA selection, yielding the 30S pre-initiation complex (PIC). Upon addition of the 50S ribosomal subunit IF-1, IF-2 and IF-3 are released leaving the mature 70S translation initiation complex. The polypeptide is Translation initiation factor IF-1 (Clostridium botulinum (strain ATCC 19397 / Type A)).